The chain runs to 336 residues: tRNA N6-adenosine threonylcarbamoyltransferase (336 aa).

The Fe cation site is built by H112 and H116. Substrate-binding positions include 136 to 140, D169, G182, and N276; that span reads LVSGG. D304 is a Fe cation binding site.

Belongs to the KAE1 / TsaD family. Requires Fe(2+) as cofactor.

It is found in the cytoplasm. The catalysed reaction is L-threonylcarbamoyladenylate + adenosine(37) in tRNA = N(6)-L-threonylcarbamoyladenosine(37) in tRNA + AMP + H(+). Required for the formation of a threonylcarbamoyl group on adenosine at position 37 (t(6)A37) in tRNAs that read codons beginning with adenine. Is involved in the transfer of the threonylcarbamoyl moiety of threonylcarbamoyl-AMP (TC-AMP) to the N6 group of A37, together with TsaE and TsaB. TsaD likely plays a direct catalytic role in this reaction. The protein is tRNA N6-adenosine threonylcarbamoyltransferase of Francisella tularensis subsp. tularensis (strain FSC 198).